The following is a 549-amino-acid chain: O-fucosyltransferase 29 (549 aa).

The helical; Signal-anchor for type II membrane protein transmembrane segment at 43-63 threads the bilayer; sequence TVMWTWVCGFMLFSLGVISLF. A glycan (N-linked (GlcNAc...) asparagine) is linked at asparagine 152. 292–294 contributes to the substrate binding site; sequence HLR. N-linked (GlcNAc...) asparagine glycosylation is found at asparagine 359 and asparagine 527. Positions 506 to 549 are disordered; the sequence is PFSYDKTSTDDEEEDMSEENHNSTSPGHVHLSSADNERDEVFPD. A compositionally biased stretch (basic and acidic residues) spans 540-549; that stretch reads DNERDEVFPD.

The protein belongs to the glycosyltransferase GT106 family.

The protein localises to the membrane. The protein operates within glycan metabolism. This Arabidopsis thaliana (Mouse-ear cress) protein is O-fucosyltransferase 29.